The chain runs to 287 residues: Xyloglucan endotransglucosylase protein 1 (287 aa).

The first 28 residues, 1 to 28 (MAFMSFINGFSTLFLVALLASSMMAAKG), serve as a signal peptide directing secretion. The 191-residue stretch at 29 to 219 (GNFYQDFDVT…WTKAPFTAYY (191 aa)) folds into the GH16 domain. Glu105 functions as the Nucleophile in the catalytic mechanism. Glu109 acts as the Proton donor in catalysis. Glu109 lines the xyloglucan pocket. N-linked (GlcNAc...) asparagine glycosylation occurs at Asn113. Xyloglucan-binding positions include 122–124 (HTN), 132–134 (NRE), 198–199 (DW), and Gly203. Intrachain disulfides connect Cys227–Cys231 and Cys266–Cys280. Residue Arg271 coordinates xyloglucan.

This sequence belongs to the glycosyl hydrolase 16 family. XTH group 2 subfamily. Post-translationally, contains at least one intrachain disulfide bond essential for its enzymatic activity. As to expression, expressed in fruit pulp. Expressed in leaves, flowers, calyces, stems and fruits. Highest expression in leaves and lowest in fruits.

It localises to the secreted. The protein resides in the cell wall. It is found in the extracellular space. The protein localises to the apoplast. It carries out the reaction breaks a beta-(1-&gt;4) bond in the backbone of a xyloglucan and transfers the xyloglucanyl segment on to O-4 of the non-reducing terminal glucose residue of an acceptor, which can be a xyloglucan or an oligosaccharide of xyloglucan.. Functionally, catalyzes xyloglucan endotransglycosylation (XET). Cleaves and religates xyloglucan polymers. Does not catalyze xyloglucan endohydrolysis (XEH). Overexpression in Arabidopsis transgenic plants results in elevated tolerance to abiotic stress, such as salt, ABA (abscisic acid) and drought stresses, and in the production of wider leaves. Overexpression in transgenic tomato plants slows down fruit ripening and softening, and the plants produce larger fruits. Both transgenic plants have larger and more irregular cells. Moreover, the fruits of the transgenic tomato have higher density of cell wall and intercellular spaces. May provide cells with more strength and thickness to maintain structural integrity. Probably involved in cell wall assembly and synthesis in fast growing tissues and in the maintenance of firmness in mature fruits. The sequence is that of Xyloglucan endotransglucosylase protein 1 from Diospyros kaki (Kaki persimmon).